Consider the following 540-residue polypeptide: Pentatricopeptide repeat-containing protein At3g29290 (540 aa).

PPR repeat units lie at residues Asn-106–Pro-140, Asn-141–Thr-175, His-177–Glu-205, Asp-213–Gly-247, Thr-248–Leu-282, Arg-283–Pro-317, Asn-318–Pro-352, Asp-353–Cys-387, Asn-389–Val-423, Ser-424–Pro-458, Asn-459–Glu-487, and Asp-489–Pro-523.

This sequence belongs to the PPR family. P subfamily.

This is Pentatricopeptide repeat-containing protein At3g29290 (EMB2076) from Arabidopsis thaliana (Mouse-ear cress).